Reading from the N-terminus, the 427-residue chain is Peptidase B (427 aa).

Positions 195 and 200 each coordinate Mn(2+). Residue Lys207 is part of the active site. Asp218, Asp277, and Glu279 together coordinate Mn(2+). Arg281 is a catalytic residue.

This sequence belongs to the peptidase M17 family. Homohexamer. Mn(2+) serves as cofactor.

Its subcellular location is the cytoplasm. The enzyme catalyses Release of an N-terminal amino acid, Xaa, from a peptide or arylamide. Xaa is preferably Glu or Asp but may be other amino acids, including Leu, Met, His, Cys and Gln.. Functionally, probably plays an important role in intracellular peptide degradation. This chain is Peptidase B, found in Salmonella agona (strain SL483).